Here is a 492-residue protein sequence, read N- to C-terminus: Bifunctional protein GlmU (492 aa).

Positions 1–241 are pyrophosphorylase; the sequence is MTFRGDTAVV…SALVAGVNDR (241 aa). Residues 12–15, Lys26, Gln83, and 88–89 each bind UDP-N-acetyl-alpha-D-glucosamine; these read LAAG and GT. Asp114 lines the Mg(2+) pocket. The UDP-N-acetyl-alpha-D-glucosamine site is built by Gly151, Glu166, Asn181, and Asn239. Asn239 contacts Mg(2+). The interval 242 to 262 is linker; the sequence is VQLAQLGAELNRRIVAAHQMA. Positions 263–492 are N-acetyltransferase; sequence GVTVIDPATT…TPPPDADQTP (230 aa). UDP-N-acetyl-alpha-D-glucosamine contacts are provided by Arg344 and Lys362. His374 serves as the catalytic Proton acceptor. Residues Tyr377 and Asn388 each contribute to the UDP-N-acetyl-alpha-D-glucosamine site. Acetyl-CoA is bound by residues Ala391, 397–398, and Ala434; that span reads NY. Residues 451–492 form a disordered region; that stretch reads GGPQRNIEDWVQQKRPGTPSAEAARKASAEQSTPPPDADQTP. A compositionally biased stretch (pro residues) spans 483 to 492; sequence TPPPDADQTP.

The protein in the N-terminal section; belongs to the N-acetylglucosamine-1-phosphate uridyltransferase family. It in the C-terminal section; belongs to the transferase hexapeptide repeat family. As to quaternary structure, homotrimer. The cofactor is Mg(2+).

The protein resides in the cytoplasm. It catalyses the reaction alpha-D-glucosamine 1-phosphate + acetyl-CoA = N-acetyl-alpha-D-glucosamine 1-phosphate + CoA + H(+). It carries out the reaction N-acetyl-alpha-D-glucosamine 1-phosphate + UTP + H(+) = UDP-N-acetyl-alpha-D-glucosamine + diphosphate. The protein operates within nucleotide-sugar biosynthesis; UDP-N-acetyl-alpha-D-glucosamine biosynthesis; N-acetyl-alpha-D-glucosamine 1-phosphate from alpha-D-glucosamine 6-phosphate (route II): step 2/2. Its pathway is nucleotide-sugar biosynthesis; UDP-N-acetyl-alpha-D-glucosamine biosynthesis; UDP-N-acetyl-alpha-D-glucosamine from N-acetyl-alpha-D-glucosamine 1-phosphate: step 1/1. It participates in bacterial outer membrane biogenesis; LPS lipid A biosynthesis. In terms of biological role, catalyzes the last two sequential reactions in the de novo biosynthetic pathway for UDP-N-acetylglucosamine (UDP-GlcNAc). The C-terminal domain catalyzes the transfer of acetyl group from acetyl coenzyme A to glucosamine-1-phosphate (GlcN-1-P) to produce N-acetylglucosamine-1-phosphate (GlcNAc-1-P), which is converted into UDP-GlcNAc by the transfer of uridine 5-monophosphate (from uridine 5-triphosphate), a reaction catalyzed by the N-terminal domain. The chain is Bifunctional protein GlmU from Mycobacterium marinum (strain ATCC BAA-535 / M).